The primary structure comprises 198 residues: Photosystem I assembly protein Ycf4 (198 aa).

Positions 1 to 20 are disordered; it reads MTASTTINKGDSPNGDSSAS. The next 2 helical transmembrane spans lie at 36-58 and 78-100; these read YWWA…SSYL and LVMG…VILW.

Belongs to the Ycf4 family.

The protein localises to the cellular thylakoid membrane. Its function is as follows. Seems to be required for the assembly of the photosystem I complex. This chain is Photosystem I assembly protein Ycf4, found in Nostoc sp. (strain PCC 7120 / SAG 25.82 / UTEX 2576).